The following is a 207-amino-acid chain: Urease accessory protein UreG (207 aa).

A GTP-binding site is contributed by 16-23; the sequence is GPVGSGKT.

It belongs to the SIMIBI class G3E GTPase family. UreG subfamily. Homodimer. UreD, UreF and UreG form a complex that acts as a GTP-hydrolysis-dependent molecular chaperone, activating the urease apoprotein by helping to assemble the nickel containing metallocenter of UreC. The UreE protein probably delivers the nickel.

Its subcellular location is the cytoplasm. Facilitates the functional incorporation of the urease nickel metallocenter. This process requires GTP hydrolysis, probably effectuated by UreG. This is Urease accessory protein UreG from Shewanella halifaxensis (strain HAW-EB4).